Here is a 1492-residue protein sequence, read N- to C-terminus: Actin cytoskeleton-regulatory complex protein PAN1 (1492 aa).

The span at 1-54 (MFNSFQQQGTIQPQGTGYYPTQQGQQGQQGQQGQQGQQGQQGQQQQSFQSQPPF) shows a compositional bias: low complexity. Disordered stretches follow at residues 1 to 175 (MFNS…INPI) and 240 to 259 (TGLYSSASQPAQAANLQPQQ). A compositionally biased stretch (polar residues) spans 70 to 104 (QGQSSFGNTSQMTNQPSSGFTSGQYAGGSNANSNL). Over residues 105 to 126 (FNQSSQQFGGVGNNNVNVNQSS) the composition is skewed to low complexity. A compositionally biased stretch (polar residues) spans 127 to 142 (DPSSLLPQGGSYNNAG). The span at 146–163 (PQLQPVQSVQSVHSMHSL) shows a compositional bias: low complexity. The segment covering 165–175 (PAQTMSSINPI) has biased composition (polar residues). A compositionally biased stretch (low complexity) spans 244–259 (SSASQPAQAANLQPQQ). 2 EH domains span residues 321-410 (DQAK…VNSF) and 661-750 (EKSL…SNKI). EF-hand domains follow at residues 354–389 (LQPKQLAKIWTLCDTSKAGELLFPEFALAMHLVNEV) and 694–729 (LNRSDLEHIWNLCDINNRGQLSKQEFALGMHLVYRK). A disordered region spans residues 761 to 828 (ASTSNDTKKA…VSGANVSSDT (68 aa)). Polar residues predominate over residues 798–823 (YSTNGTSSSSLDNTPRGSPVTVSGAN). Coiled coils occupy residues 982-1022 (LKSR…RKNR) and 1098-1207 (ERVQ…DDGF). Disordered stretches follow at residues 1120–1225 (INKP…PQVE) and 1237–1492 (PSAA…PPLP). Low complexity predominate over residues 1126–1137 (SPSQQSLSSPSQ). Over residues 1167-1196 (EKRLREELERIKLKKKADKEKRLAELRRQV) the composition is skewed to basic and acidic residues. Low complexity-rich tracts occupy residues 1206 to 1219 (GFSSSVSGSNNGNV), 1237 to 1257 (PSAANPVSSVSASMSGSSTPV), and 1271 to 1284 (STDSSNSTSGLSDL). A compositionally biased stretch (basic and acidic residues) spans 1285-1298 (KAAEAQRRSQRGLD). Positions 1299–1309 (DDADAWSDDEP) are enriched in acidic residues. Pro residues-rich tracts occupy residues 1311–1406 (PVAP…PPLP), 1414–1423 (PVVPLAPPLP), and 1479–1492 (GLPPSGIPPPPPLP).

This sequence belongs to the PAN1 family. Component of the PAN1 actin cytoskeleton-regulatory complex.

The protein resides in the cell membrane. Its subcellular location is the endosome membrane. It is found in the cytoplasm. The protein localises to the cytoskeleton. It localises to the actin patch. Functionally, component of the PAN1 actin cytoskeleton-regulatory complex required for the internalization of endosomes during actin-coupled endocytosis. The complex links the site of endocytosis to the cell membrane-associated actin cytoskeleton. Mediates uptake of external molecules and vacuolar degradation of plasma membrane proteins. Plays a role in the proper organization of the cell membrane-associated actin cytoskeleton and promotes its destabilization. This Vanderwaltozyma polyspora (strain ATCC 22028 / DSM 70294 / BCRC 21397 / CBS 2163 / NBRC 10782 / NRRL Y-8283 / UCD 57-17) (Kluyveromyces polysporus) protein is Actin cytoskeleton-regulatory complex protein PAN1 (PAN1).